The sequence spans 417 residues: 4-hydroxy-3-methylbut-2-en-1-yl diphosphate synthase (flavodoxin) (417 aa).

[4Fe-4S] cluster contacts are provided by Cys-304, Cys-307, Cys-350, and Glu-357.

Belongs to the IspG family. [4Fe-4S] cluster serves as cofactor.

The catalysed reaction is (2E)-4-hydroxy-3-methylbut-2-enyl diphosphate + oxidized [flavodoxin] + H2O + 2 H(+) = 2-C-methyl-D-erythritol 2,4-cyclic diphosphate + reduced [flavodoxin]. Its pathway is isoprenoid biosynthesis; isopentenyl diphosphate biosynthesis via DXP pathway; isopentenyl diphosphate from 1-deoxy-D-xylulose 5-phosphate: step 5/6. Converts 2C-methyl-D-erythritol 2,4-cyclodiphosphate (ME-2,4cPP) into 1-hydroxy-2-methyl-2-(E)-butenyl 4-diphosphate. In Sinorhizobium medicae (strain WSM419) (Ensifer medicae), this protein is 4-hydroxy-3-methylbut-2-en-1-yl diphosphate synthase (flavodoxin).